Consider the following 163-residue polypeptide: Nucleotide-binding protein NTHI1194 (163 aa).

The protein belongs to the YajQ family.

Its function is as follows. Nucleotide-binding protein. In Haemophilus influenzae (strain 86-028NP), this protein is Nucleotide-binding protein NTHI1194.